The chain runs to 177 residues: MSRVGKLPITIPEGVTVGLNDLEVKISGPKGELSKIFKGNIAISLAENKLLVKPLAANKSARAMWGTARSIISNMVIGVKEGFKLKLEINGVGYRAMVKGKYLNLMLAKSHNTKIEIPSHIKIDVPKQNIIILEGTDKEKLGQFASIIIKQRPPEPYKGKGIKFDNQFIPRKEGKKN.

The protein belongs to the universal ribosomal protein uL6 family. As to quaternary structure, part of the 50S ribosomal subunit.

This protein binds to the 23S rRNA, and is important in its secondary structure. It is located near the subunit interface in the base of the L7/L12 stalk, and near the tRNA binding site of the peptidyltransferase center. The polypeptide is Large ribosomal subunit protein uL6 (Rickettsia akari (strain Hartford)).